Here is an 869-residue protein sequence, read N- to C-terminus: MSSCKTTLSEMVGSVTKDRGTINVEARTRSSNVTFKPPVTHDMVRSLFDPTLKKSLLEKCIALAIISNFFICYWVFQRFGLQFTKYFFLVQYLFWRIAYNLGIGLVLHYQSHYETLTNCAKTHAIFSKIPQNKDANSNFSTNSNSFSEKFWNFIRKFCQYEIRSKMPKEYDLFAYPEEINVWLIFRQFVDLILMQDFVTYIIYVYLSIPYSWVQIFNWRSLLGVILILFNIWVKLDAHRVVKDYAWYWGDFFFLEESELIFDGVFNISPHPMYSIGYLGYYGLSLICNDYKVLLVSVFGHYSQFLFLKYVENPHIERTYGDGTDSDSQMNSRIDDLISKENYDYSRPLINMGLSFNNFNKLRFTDYFTIGTVAALMLGTIMNARFINLNYLFITVFVTKLVSWLFISTILYKQSQSKWFTRLFLENGYTQVYSYEQWQFIYNYYLVLTYTLMIIHTGLQIWSNFSNINNSQLIFGLILVALQTWCDKETRLAISDFGWFYGDFFLSNYISTRKLTSQGIYRYLNHPEAVLGVVGVWGTVLMTNFAVTNIILAVLWTLTNFILVKFIETPHVNKIYGKTKRVSGVGKTLLGLKPLRQVSDIVNRIENIIIKSLVDESKNSNGGAELLPKNYQDNKEWNILIQEAMDSVATRLSPYCELKIENEQVETNFVLPTPVTLNWKMPIELYNGDDWIGLYKVIDTRADREKTRVGSGGHWSATSKDSYMNHGLRHKESVTEIKATEKYVQGKVTFDTSLLYFENGIYEFRYHSGNSHKVLLISTPFEISLPVLNTTTPELFEKDLTEFLTKVNVLKDGKFRPLGNKFFGMDSLKQLIKNSIGVELSSEYMRRVNGDAHVISHRAWDIKQTLDSLA.

Ser2 is subject to N-acetylserine. Residues 2–55 (SSCKTTLSEMVGSVTKDRGTINVEARTRSSNVTFKPPVTHDMVRSLFDPTLKKS) lie on the Lumenal side of the membrane. A helical transmembrane segment spans residues 56 to 76 (LLEKCIALAIISNFFICYWVF). Topologically, residues 77–86 (QRFGLQFTKY) are cytoplasmic. A helical membrane pass occupies residues 87–107 (FFLVQYLFWRIAYNLGIGLVL). At 108-187 (HYQSHYETLT…EINVWLIFRQ (80 aa)) the chain is on the lumenal side. A helical membrane pass occupies residues 188 to 208 (FVDLILMQDFVTYIIYVYLSI). The Cytoplasmic segment spans residues 209–212 (PYSW). A helical membrane pass occupies residues 213-233 (VQIFNWRSLLGVILILFNIWV). Residues 234 to 258 (KLDAHRVVKDYAWYWGDFFFLEESE) are Lumenal-facing. A helical transmembrane segment spans residues 259–279 (LIFDGVFNISPHPMYSIGYLG). Over 280–291 (YYGLSLICNDYK) the chain is Cytoplasmic. Residues 292-310 (VLLVSVFGHYSQFLFLKYV) form a helical membrane-spanning segment. Topologically, residues 311–362 (ENPHIERTYGDGTDSDSQMNSRIDDLISKENYDYSRPLINMGLSFNNFNKLR) are lumenal. Residues 363 to 383 (FTDYFTIGTVAALMLGTIMNA) traverse the membrane as a helical segment. Residues 384-389 (RFINLN) lie on the Cytoplasmic side of the membrane. Residues 390 to 410 (YLFITVFVTKLVSWLFISTIL) traverse the membrane as a helical segment. At 411–439 (YKQSQSKWFTRLFLENGYTQVYSYEQWQF) the chain is on the lumenal side. Residues 440 to 460 (IYNYYLVLTYTLMIIHTGLQI) form a helical membrane-spanning segment. The Cytoplasmic segment spans residues 461–463 (WSN). The helical transmembrane segment at 464–484 (FSNINNSQLIFGLILVALQTW) threads the bilayer. Over 485–534 (CDKETRLAISDFGWFYGDFFLSNYISTRKLTSQGIYRYLNHPEAVLGVVG) the chain is Lumenal. Residues 535 to 555 (VWGTVLMTNFAVTNIILAVLW) form a helical membrane-spanning segment. At 556–869 (TLTNFILVKF…DIKQTLDSLA (314 aa)) the chain is on the cytoplasmic side.

This sequence belongs to the class VI-like SAM-binding methyltransferase superfamily. CHO2 family.

The protein localises to the endoplasmic reticulum membrane. The catalysed reaction is a 1,2-diacyl-sn-glycero-3-phosphoethanolamine + S-adenosyl-L-methionine = a 1,2-diacyl-sn-glycero-3-phospho-N-methylethanolamine + S-adenosyl-L-homocysteine + H(+). It functions in the pathway phospholipid metabolism; phosphatidylcholine biosynthesis. Functionally, catalyzes the first step of the methylation pathway of phosphatidylcholine biosynthesis, the SAM-dependent methylation of phosphatidylethanolamine (PE) to phosphatidylmonomethylethanolamine (PMME). Preferentially converts di-C16:1 substrates. This Saccharomyces cerevisiae (strain ATCC 204508 / S288c) (Baker's yeast) protein is Phosphatidylethanolamine N-methyltransferase.